A 97-amino-acid polypeptide reads, in one-letter code: Large ribosomal subunit protein uL23 (97 aa).

This sequence belongs to the universal ribosomal protein uL23 family. In terms of assembly, part of the 50S ribosomal subunit. Contacts protein L29, and trigger factor when it is bound to the ribosome.

In terms of biological role, one of the early assembly proteins it binds 23S rRNA. One of the proteins that surrounds the polypeptide exit tunnel on the outside of the ribosome. Forms the main docking site for trigger factor binding to the ribosome. This chain is Large ribosomal subunit protein uL23, found in Pelagibacter ubique (strain HTCC1062).